Consider the following 166-residue polypeptide: MPRSQRNDNFIDKTFTVVADILVKVLPTSNREKQAFTYYRDGMAAQAEGEYAEALQNYYQALRLEIDPYDRSYILYNIGLIYTCNGEHGRALEYYYQALERNPSLPQALNNIAVIYHYRGEQAIERGQSEISKLLFDKAADYWKEAIRLAPTNYLEAQSWLNQYTN.

3 TPR repeats span residues 35-68 (AFTYYRDGMAAQAEGEYAEALQNYYQALRLEIDP), 72-105 (SYILYNIGLIYTCNGEHGRALEYYYQALERNPSL), and 120-153 (GEQAIERGQSEISKLLFDKAADYWKEAIRLAPTN).

It belongs to the Ycf3 family.

The protein localises to the plastid. The protein resides in the chloroplast thylakoid membrane. Essential for the assembly of the photosystem I (PSI) complex. May act as a chaperone-like factor to guide the assembly of the PSI subunits. The polypeptide is Photosystem I assembly protein Ycf3 (Oltmannsiellopsis viridis (Marine flagellate)).